Reading from the N-terminus, the 126-residue chain is Fluoride-specific ion channel FluC (126 aa).

The next 4 helical transmembrane spans lie at 5–25 (LHFL…WLLG), 35–55 (WGTL…LGLI), 68–88 (ALVT…AEVV), and 99–119 (AAGY…LGLA). Na(+) contacts are provided by Gly75 and Thr78.

The protein belongs to the fluoride channel Fluc/FEX (TC 1.A.43) family.

The protein resides in the cell inner membrane. The catalysed reaction is fluoride(in) = fluoride(out). With respect to regulation, na(+) is not transported, but it plays an essential structural role and its presence is essential for fluoride channel function. Fluoride-specific ion channel. Important for reducing fluoride concentration in the cell, thus reducing its toxicity. The polypeptide is Fluoride-specific ion channel FluC (Bordetella avium (strain 197N)).